Reading from the N-terminus, the 185-residue chain is C-phycoerythrin beta chain (185 aa).

Residues Cys49 and Cys60 each contribute to the (2R,3E)-phycoerythrobilin site. Asn71 is modified (N4-methylasparagine). The (2R,3E)-phycoerythrobilin site is built by Cys81 and Cys166.

This sequence belongs to the phycobiliprotein family. As to quaternary structure, heterodimer of an alpha and a beta chain. Post-translationally, contains three covalently linked bilin chromophores.

Its subcellular location is the cellular thylakoid membrane. Its function is as follows. Light-harvesting photosynthetic bile pigment-protein from the phycobiliprotein complex. The protein is C-phycoerythrin beta chain (cpeB) of Pseudanabaena tenuis (strain PCC 7409).